The following is a 210-amino-acid chain: Proteasome subunit beta (210 aa).

Residues 1-7 (MEVLKTG) constitute a propeptide, removed in mature form; by autocatalysis. Residue T8 is the Nucleophile of the active site.

Belongs to the peptidase T1B family. In terms of assembly, the 20S proteasome core is composed of 14 alpha and 14 beta subunits that assemble into four stacked heptameric rings, resulting in a barrel-shaped structure. The two inner rings, each composed of seven catalytic beta subunits, are sandwiched by two outer rings, each composed of seven alpha subunits. The catalytic chamber with the active sites is on the inside of the barrel. Has a gated structure, the ends of the cylinder being occluded by the N-termini of the alpha-subunits. Is capped at one or both ends by the proteasome regulatory ATPase, PAN.

The protein localises to the cytoplasm. The enzyme catalyses Cleavage of peptide bonds with very broad specificity.. Its activity is regulated as follows. The formation of the proteasomal ATPase PAN-20S proteasome complex, via the docking of the C-termini of PAN into the intersubunit pockets in the alpha-rings, triggers opening of the gate for substrate entry. Interconversion between the open-gate and close-gate conformations leads to a dynamic regulation of the 20S proteasome proteolysis activity. Functionally, component of the proteasome core, a large protease complex with broad specificity involved in protein degradation. The chain is Proteasome subunit beta from Picrophilus torridus (strain ATCC 700027 / DSM 9790 / JCM 10055 / NBRC 100828 / KAW 2/3).